The chain runs to 170 residues: Peptide deformylase (170 aa).

Fe cation contacts are provided by cysteine 91 and histidine 133. Residue glutamate 134 is part of the active site. Histidine 137 is a binding site for Fe cation.

This sequence belongs to the polypeptide deformylase family. Requires Fe(2+) as cofactor.

The catalysed reaction is N-terminal N-formyl-L-methionyl-[peptide] + H2O = N-terminal L-methionyl-[peptide] + formate. Removes the formyl group from the N-terminal Met of newly synthesized proteins. Requires at least a dipeptide for an efficient rate of reaction. N-terminal L-methionine is a prerequisite for activity but the enzyme has broad specificity at other positions. This Histophilus somni (strain 2336) (Haemophilus somnus) protein is Peptide deformylase.